The primary structure comprises 344 residues: Methylthioribose-1-phosphate isomerase (344 aa).

Substrate is bound by residues R46–A48, R89, and Q196. D237 acts as the Proton donor in catalysis. Substrate is bound at residue N247–K248.

This sequence belongs to the eIF-2B alpha/beta/delta subunits family. MtnA subfamily.

It catalyses the reaction 5-(methylsulfanyl)-alpha-D-ribose 1-phosphate = 5-(methylsulfanyl)-D-ribulose 1-phosphate. The protein operates within amino-acid biosynthesis; L-methionine biosynthesis via salvage pathway; L-methionine from S-methyl-5-thio-alpha-D-ribose 1-phosphate: step 1/6. Its function is as follows. Catalyzes the interconversion of methylthioribose-1-phosphate (MTR-1-P) into methylthioribulose-1-phosphate (MTRu-1-P). This Syntrophotalea carbinolica (strain DSM 2380 / NBRC 103641 / GraBd1) (Pelobacter carbinolicus) protein is Methylthioribose-1-phosphate isomerase.